The sequence spans 130 residues: Small ribosomal subunit protein bS18 (130 aa).

Basic and acidic residues-rich tracts occupy residues 98-108 (KKMEESVKSAE) and 117-130 (EESKPKRTRKAKTE). The tract at residues 98–130 (KKMEESVKSAEPKATAEATEESKPKRTRKAKTE) is disordered.

This sequence belongs to the bacterial ribosomal protein bS18 family. As to quaternary structure, part of the 30S ribosomal subunit. Forms a tight heterodimer with protein bS6.

Binds as a heterodimer with protein bS6 to the central domain of the 16S rRNA, where it helps stabilize the platform of the 30S subunit. The sequence is that of Small ribosomal subunit protein bS18 from Metamycoplasma arthritidis (strain 158L3-1) (Mycoplasma arthritidis).